A 616-amino-acid polypeptide reads, in one-letter code: Glutamine--fructose-6-phosphate aminotransferase [isomerizing] (616 aa).

Cys2 serves as the catalytic Nucleophile; for GATase activity. The Glutamine amidotransferase type-2 domain maps to 2–222; it reads CGIIGYSGPR…QERIVALSGD (221 aa). Residues 70–89 form a disordered region; it reads TGIGHTRWATHGEPSDRNAH. SIS domains are found at residues 289-428 and 461-606; these read IRDD…LRGF and LAHW…VDRP. Lys611 serves as the catalytic For Fru-6P isomerization activity.

In terms of assembly, homodimer.

The protein resides in the cytoplasm. The catalysed reaction is D-fructose 6-phosphate + L-glutamine = D-glucosamine 6-phosphate + L-glutamate. Functionally, catalyzes the first step in hexosamine metabolism, converting fructose-6P into glucosamine-6P using glutamine as a nitrogen source. This chain is Glutamine--fructose-6-phosphate aminotransferase [isomerizing], found in Tropheryma whipplei (strain Twist) (Whipple's bacillus).